The chain runs to 382 residues: Anhydro-N-acetylmuramic acid kinase (382 aa).

9–16 (GTSLDGID) lines the ATP pocket.

This sequence belongs to the anhydro-N-acetylmuramic acid kinase family.

It catalyses the reaction 1,6-anhydro-N-acetyl-beta-muramate + ATP + H2O = N-acetyl-D-muramate 6-phosphate + ADP + H(+). It functions in the pathway amino-sugar metabolism; 1,6-anhydro-N-acetylmuramate degradation. It participates in cell wall biogenesis; peptidoglycan recycling. Functionally, catalyzes the specific phosphorylation of 1,6-anhydro-N-acetylmuramic acid (anhMurNAc) with the simultaneous cleavage of the 1,6-anhydro ring, generating MurNAc-6-P. Is required for the utilization of anhMurNAc either imported from the medium or derived from its own cell wall murein, and thus plays a role in cell wall recycling. This is Anhydro-N-acetylmuramic acid kinase from Bacillus thuringiensis subsp. konkukian (strain 97-27).